The following is a 458-amino-acid chain: Opine oxidase subunit A (458 aa).

It to T-protein and to dimethylglycine dehydrogenase. In terms of assembly, heterodimer of a subunit A and a subunit B.

Its pathway is opine metabolism; octopine degradation. In terms of biological role, oxidative cleavage of octopine into L-arginine and pyruvate. The polypeptide is Opine oxidase subunit A (ooxA) (Rhizobium meliloti (strain 1021) (Ensifer meliloti)).